We begin with the raw amino-acid sequence, 276 residues long: Secretagogin (276 aa).

5 EF-hand domains span residues 12-47, 105-140, 149-184, 197-232, and 240-276; these read LDAA…LLAK, DNSV…LFLH, ELEE…QENF, ERKR…MMEL, and VDLD…KINP. Ca(2+) is bound by residues D118, D120, S122, E129, D162, N164, D166, R168, D173, D210, S212, T214, E221, D254, N256, D258, K260, and E265.

Highly expressed in pancreas, in particular in pancreatic islets and pancreatic beta-cells. Detected in prostate, adrenal gland, small intestine, stomach and thyroid (at protein level).

It localises to the cytoplasm. The protein resides in the secreted. Its subcellular location is the cytoplasmic vesicle. It is found in the secretory vesicle membrane. This is Secretagogin (Scgn) from Rattus norvegicus (Rat).